Consider the following 218-residue polypeptide: DNA-directed RNA polymerases IV and V subunit 5B (218 aa).

The protein belongs to the archaeal Rpo5/eukaryotic RPB5 RNA polymerase subunit family. As to quaternary structure, component of the RNA polymerase IV and V complexes. Interacts with NRPD1. Expressed inleaves, flower buds, flowers and siliques.

It localises to the nucleus. In terms of biological role, DNA-dependent RNA polymerase catalyzes the transcription of DNA into RNA using the four ribonucleoside triphosphates as substrates. Component of RNA polymerases IV and V which mediate short-interfering RNAs (siRNA) accumulation and subsequent RNA-directed DNA methylation-dependent (RdDM) transcriptional gene silencing (TGS) of endogenous repeated sequences, including transposable elements. The chain is DNA-directed RNA polymerases IV and V subunit 5B (NRPD5B) from Arabidopsis thaliana (Mouse-ear cress).